A 308-amino-acid polypeptide reads, in one-letter code: Porphobilinogen deaminase (308 aa).

At cysteine 240 the chain carries S-(dipyrrolylmethanemethyl)cysteine.

Belongs to the HMBS family. Monomer. Dipyrromethane is required as a cofactor.

It catalyses the reaction 4 porphobilinogen + H2O = hydroxymethylbilane + 4 NH4(+). Its pathway is porphyrin-containing compound metabolism; protoporphyrin-IX biosynthesis; coproporphyrinogen-III from 5-aminolevulinate: step 2/4. Its function is as follows. Tetrapolymerization of the monopyrrole PBG into the hydroxymethylbilane pre-uroporphyrinogen in several discrete steps. The protein is Porphobilinogen deaminase of Campylobacter hominis (strain ATCC BAA-381 / DSM 21671 / CCUG 45161 / LMG 19568 / NCTC 13146 / CH001A).